The primary structure comprises 139 residues: Early placenta insulin-like peptide (139 aa).

The N-terminal stretch at methionine 1–alanine 25 is a signal peptide. Disulfide bonds link cysteine 31–cysteine 125, cysteine 43–cysteine 138, and cysteine 124–cysteine 129. The propeptide at leucine 59–arginine 114 is c peptide.

It belongs to the insulin family. Expressed in placenta, uterus and in fetal perichondrium. Expression levels were increased in both early placentas and molar pregnancies and were reduced in choriocarcinoma cells.

It localises to the secreted. In terms of biological role, may play an important role in trophoblast development and in the regulation of bone formation. This is Early placenta insulin-like peptide (INSL4) from Homo sapiens (Human).